The primary structure comprises 281 residues: 3-hydroxybutyryl-CoA dehydrogenase (281 aa).

The protein belongs to the 3-hydroxyacyl-CoA dehydrogenase family.

The enzyme catalyses (3S)-3-hydroxybutanoyl-CoA + NADP(+) = acetoacetyl-CoA + NADPH + H(+). Its pathway is lipid metabolism; butanoate metabolism. The sequence is that of 3-hydroxybutyryl-CoA dehydrogenase (hbd) from Clostridioides difficile (Peptoclostridium difficile).